The following is a 173-amino-acid chain: Crossover junction endodeoxyribonuclease RuvC (173 aa).

Residues D8, E67, and D139 contribute to the active site. Residues D8, E67, and D139 each contribute to the Mg(2+) site.

The protein belongs to the RuvC family. Homodimer which binds Holliday junction (HJ) DNA. The HJ becomes 2-fold symmetrical on binding to RuvC with unstacked arms; it has a different conformation from HJ DNA in complex with RuvA. In the full resolvosome a probable DNA-RuvA(4)-RuvB(12)-RuvC(2) complex forms which resolves the HJ. The cofactor is Mg(2+).

It localises to the cytoplasm. The enzyme catalyses Endonucleolytic cleavage at a junction such as a reciprocal single-stranded crossover between two homologous DNA duplexes (Holliday junction).. Its function is as follows. The RuvA-RuvB-RuvC complex processes Holliday junction (HJ) DNA during genetic recombination and DNA repair. Endonuclease that resolves HJ intermediates. Cleaves cruciform DNA by making single-stranded nicks across the HJ at symmetrical positions within the homologous arms, yielding a 5'-phosphate and a 3'-hydroxyl group; requires a central core of homology in the junction. The consensus cleavage sequence is 5'-(A/T)TT(C/G)-3'. Cleavage occurs on the 3'-side of the TT dinucleotide at the point of strand exchange. HJ branch migration catalyzed by RuvA-RuvB allows RuvC to scan DNA until it finds its consensus sequence, where it cleaves and resolves the cruciform DNA. This Shewanella piezotolerans (strain WP3 / JCM 13877) protein is Crossover junction endodeoxyribonuclease RuvC.